A 182-amino-acid chain; its full sequence is Adenylate kinase (182 aa).

12-17 provides a ligand contact to ATP; that stretch reads GAGKGT. The interval 32 to 61 is NMP; the sequence is STGELLRKEIDLDTYLGKQVKDIMNKGELV. Residues threonine 33, arginine 38, 59–61, 85–88, and glutamine 92 contribute to the AMP site; these read ELV and GYPR. The segment at 126–132 is LID; the sequence is LRGRKDD. Arginine 127 is a binding site for ATP. AMP is bound by residues arginine 129 and arginine 140. Glycine 168 contacts ATP.

Belongs to the adenylate kinase family. Monomer.

The protein localises to the cytoplasm. The enzyme catalyses AMP + ATP = 2 ADP. It functions in the pathway purine metabolism; AMP biosynthesis via salvage pathway; AMP from ADP: step 1/1. Catalyzes the reversible transfer of the terminal phosphate group between ATP and AMP. Plays an important role in cellular energy homeostasis and in adenine nucleotide metabolism. This Prochlorococcus marinus (strain MIT 9515) protein is Adenylate kinase.